We begin with the raw amino-acid sequence, 83 residues long: MAMKSVSNFAIFLILFLVTSEISEIEAKDKECLKGYIDAPLSYCMARIYPSLCYRNCRFYKGAKGGKCDGLKCFCDFCSDKPF.

Positions 1-27 are cleaved as a signal peptide; the sequence is MAMKSVSNFAIFLILFLVTSEISEIEA. Intrachain disulfides connect cysteine 32–cysteine 78, cysteine 44–cysteine 68, cysteine 53–cysteine 73, and cysteine 57–cysteine 75.

It belongs to the DEFL family. Protease inhibitor I18 (RTI/MTI-2) subfamily.

It is found in the secreted. This Arabidopsis thaliana (Mouse-ear cress) protein is Defensin-like protein 194 (ATTI3).